Consider the following 107-residue polypeptide: MTTFTLADLDRIVRSRAAASPEESYTAKLIAAGPGKPAKKLGEEAVEAAIAAVQGDRTSLVSEAADVLYHLLVVLAGGGIPLEEVMAELERRTTQSGLAEKAARRRP.

The protein belongs to the PRA-PH family.

It is found in the cytoplasm. It catalyses the reaction 1-(5-phospho-beta-D-ribosyl)-ATP + H2O = 1-(5-phospho-beta-D-ribosyl)-5'-AMP + diphosphate + H(+). Its pathway is amino-acid biosynthesis; L-histidine biosynthesis; L-histidine from 5-phospho-alpha-D-ribose 1-diphosphate: step 2/9. The chain is Phosphoribosyl-ATP pyrophosphatase from Methylobacterium nodulans (strain LMG 21967 / CNCM I-2342 / ORS 2060).